The following is a 253-amino-acid chain: Triosephosphate isomerase (253 aa).

9–11 is a binding site for substrate; that stretch reads NWK. The active-site Electrophile is the histidine 95. Glutamate 167 (proton acceptor) is an active-site residue. Substrate-binding positions include glycine 173, serine 213, and 234 to 235; that span reads GG. Serine 213 carries the phosphoserine modification.

The protein belongs to the triosephosphate isomerase family. As to quaternary structure, homodimer.

Its subcellular location is the cytoplasm. The enzyme catalyses D-glyceraldehyde 3-phosphate = dihydroxyacetone phosphate. Its pathway is carbohydrate biosynthesis; gluconeogenesis. The protein operates within carbohydrate degradation; glycolysis; D-glyceraldehyde 3-phosphate from glycerone phosphate: step 1/1. Its function is as follows. Involved in the gluconeogenesis. Catalyzes stereospecifically the conversion of dihydroxyacetone phosphate (DHAP) to D-glyceraldehyde-3-phosphate (G3P). This Geobacillus kaustophilus (strain HTA426) protein is Triosephosphate isomerase.